A 212-amino-acid polypeptide reads, in one-letter code: Glycerol-3-phosphate acyltransferase (212 aa).

5 helical membrane passes run 5–25, 53–73, 80–100, 112–132, and 138–158; these read ALGMIIFAYLCGSISSAILVC, VAAAAVLVFDILKGMLPVWLA, PLYLGLTAIAACLGHIYPVFF, FGAIAPIGWDLTGLMTGTWLL, and GYSSLGAIISALIAPFYVWWF.

Belongs to the PlsY family. As to quaternary structure, probably interacts with PlsX.

Its subcellular location is the cell inner membrane. It carries out the reaction an acyl phosphate + sn-glycerol 3-phosphate = a 1-acyl-sn-glycero-3-phosphate + phosphate. Its pathway is lipid metabolism; phospholipid metabolism. In terms of biological role, catalyzes the transfer of an acyl group from acyl-phosphate (acyl-PO(4)) to glycerol-3-phosphate (G3P) to form lysophosphatidic acid (LPA). This enzyme utilizes acyl-phosphate as fatty acyl donor, but not acyl-CoA or acyl-ACP. In Serratia proteamaculans (strain 568), this protein is Glycerol-3-phosphate acyltransferase.